A 430-amino-acid chain; its full sequence is Threonine synthase (430 aa).

At Lys-108 the chain carries N6-(pyridoxal phosphate)lysine.

This sequence belongs to the threonine synthase family. Pyridoxal 5'-phosphate is required as a cofactor.

It catalyses the reaction O-phospho-L-homoserine + H2O = L-threonine + phosphate. It functions in the pathway amino-acid biosynthesis; L-threonine biosynthesis; L-threonine from L-aspartate: step 5/5. Its function is as follows. Catalyzes the gamma-elimination of phosphate from L-phosphohomoserine and the beta-addition of water to produce L-threonine. The chain is Threonine synthase (thrC) from Buchnera aphidicola subsp. Baizongia pistaciae (strain Bp).